The primary structure comprises 171 residues: Crossover junction endodeoxyribonuclease RuvC (171 aa).

Catalysis depends on residues Asp-12, Glu-72, and Asp-144. Residues Asp-12, Glu-72, and Asp-144 each coordinate Mg(2+).

It belongs to the RuvC family. As to quaternary structure, homodimer which binds Holliday junction (HJ) DNA. The HJ becomes 2-fold symmetrical on binding to RuvC with unstacked arms; it has a different conformation from HJ DNA in complex with RuvA. In the full resolvosome a probable DNA-RuvA(4)-RuvB(12)-RuvC(2) complex forms which resolves the HJ. The cofactor is Mg(2+).

Its subcellular location is the cytoplasm. It catalyses the reaction Endonucleolytic cleavage at a junction such as a reciprocal single-stranded crossover between two homologous DNA duplexes (Holliday junction).. Its function is as follows. The RuvA-RuvB-RuvC complex processes Holliday junction (HJ) DNA during genetic recombination and DNA repair. Endonuclease that resolves HJ intermediates. Cleaves cruciform DNA by making single-stranded nicks across the HJ at symmetrical positions within the homologous arms, yielding a 5'-phosphate and a 3'-hydroxyl group; requires a central core of homology in the junction. The consensus cleavage sequence is 5'-(A/T)TT(C/G)-3'. Cleavage occurs on the 3'-side of the TT dinucleotide at the point of strand exchange. HJ branch migration catalyzed by RuvA-RuvB allows RuvC to scan DNA until it finds its consensus sequence, where it cleaves and resolves the cruciform DNA. The protein is Crossover junction endodeoxyribonuclease RuvC of Afipia carboxidovorans (strain ATCC 49405 / DSM 1227 / KCTC 32145 / OM5) (Oligotropha carboxidovorans).